The primary structure comprises 781 residues: Poly(ADP-ribose) glycohydrolase 1 (781 aa).

Disordered stretches follow at residues 28-87 (AHQV…VSEN), 102-131 (SLDNVTERSEHTLDNHKSTEPMEEDVNNKS), and 206-232 (ADSTFVGEDSKNQRQSGTTSDEVDADS). A compositionally biased stretch (basic and acidic residues) spans 106-121 (VTERSEHTLDNHKSTE).

The protein belongs to the poly(ADP-ribose) glycohydrolase family. As to expression, expressed in head and tail neurons. Also detected in the central nerve cord and motor neurons.

Its subcellular location is the nucleus. The enzyme catalyses [(1''-&gt;2')-ADP-alpha-D-ribose](n) + H2O = [(1''-&gt;2')-ADP-alpha-D-ribose](n-1) + ADP-D-ribose. In terms of biological role, poly(ADP-ribose) synthesized after DNA damage is only present transiently and is rapidly degraded by poly(ADP-ribose) glycohydrolase. Poly(ADP-ribose) metabolism may be required for maintenance of the normal function of neuronal cells. This chain is Poly(ADP-ribose) glycohydrolase 1, found in Caenorhabditis elegans.